A 593-amino-acid polypeptide reads, in one-letter code: MRVTQEFYELLRNRINISDVVRQKLALTRKSSNYVGLCPFHQEKTPSFTVSDSKRFFYCFGCKASGDVIKFTSNISGLSYNESAIKLANDYGIEIPKLTVKQKEFYEESDNILNILELANKFFRTQLTPEILNYLNQRNITETTIKEFSIGFSPRNNKFAKFFLDKKIDITTLGQAGLIGKRKNGEIYNLFSNRITIPIRNIYNKIVGFGARVLGNGLPKYLNSYETIVFQKNDTLYGEHKAISSSYKKNRSILVEGYFDVIALHQAGFSEVVASLGTSVTENHLHKLWRACDEIILCLDGDNAGIKASIRTINLALPLVNSEKKISFIRLPSGLDPDDVVNKNGADFFAKLIDKRISLSEMIWYIEYSGKNFKTAEEKANLEKNLKDYCNKISDSNLKASYYRFFKDQIWQNLVIKQKKIITQNFNSSLIASSHCYSELEMLEHAFCALLIKFPIMLAEKDIRDFILNLNFNNKSLEEFRNWYLNEIIDNKVEESEITAIVEKTSFFDIFLLLSKADNLFLDISFNKNNIRLDLLWQWLYKKYYLINLQQEYAISINGNHDFEKVLLYKKEILKIVNELQVLNESFINQTIT.

The CHC2-type zinc-finger motif lies at 38–62; the sequence is CPFHQEKTPSFTVSDSKRFFYCFGC. Residues 250–332 enclose the Toprim domain; it reads NRSILVEGYF…EKKISFIRLP (83 aa). Positions 256, 300, and 302 each coordinate Mg(2+).

The protein belongs to the DnaG primase family. As to quaternary structure, monomer. Interacts with DnaB. Zn(2+) serves as cofactor. It depends on Mg(2+) as a cofactor.

The catalysed reaction is ssDNA + n NTP = ssDNA/pppN(pN)n-1 hybrid + (n-1) diphosphate.. Functionally, RNA polymerase that catalyzes the synthesis of short RNA molecules used as primers for DNA polymerase during DNA replication. This Rickettsia typhi (strain ATCC VR-144 / Wilmington) protein is DNA primase.